Reading from the N-terminus, the 324-residue chain is Short chain dehydrogenase/reductase dmxR8 (324 aa).

NADP(+)-binding residues include Leu33, Lys58, Asp83, and Asn110. Ser163 acts as the Proton donor in catalysis. NADP(+)-binding residues include Tyr200 and Lys204. Tyr200 acts as the Proton acceptor in catalysis. The active-site Lowers pKa of active site Tyr is the Lys204.

It belongs to the short-chain dehydrogenases/reductases (SDR) family.

Its pathway is secondary metabolite biosynthesis. Functionally, short chain dehydrogenase; part of the gene cluster that mediates the biosynthesis of the dimeric xanthones cryptosporioptides. The pathway begins with the synthesis of atrochrysone thioester by the polyketide synthase dmx-nrPKS. The atrochrysone carboxyl ACP thioesterase dmxR1 then breaks the thioester bond and releases the atrochrysone carboxylic acid from dmx-nrPKS. Atrochrysone carboxylic acid is decarboxylated by the decarboxylase dmxR15, and oxidized by the anthrone oxygenase dmxR16 to yield emodin. Emodin is then reduced to emodin hydroquinone by the oxidoreductase dmxR7. A-ring reduction by the short chain dehydrogenase dmxR18, dehydration by the scytalone dehydratase-like protein dmxR17 and probable spontaneous re-oxidation, results in overall deoxygenation to chrysophanol. Baeyer-Villiger oxidation by the Baeyer-Villiger monooxygenase (BVMO) dmxR6 then yields monodictylactone in equilibrium with monodictyphenone. In the case of the cryptosporioptides biosynthesis, monodictylactone is reduced at C-12 to an alcohol (by the short chain dehydrogenases dmxR12 or dmxR8) and hydroxylated at C-5 by dmxR9, yielding the electron-rich aromatic which could eliminate H(2)O to form the ortho-quinonemethide, followed by tautomerisation to paraquinone and complete the formal reduction to produce the 10-methylgroup. Conjugate addition of C-4a-OH to the resulting paraquinone by the monooxygenase dmxR10 then gives cyclohexadienone, which is then reduced at C-5 by the short chain dehydrogenase dmxR3 to give the dihydroxanthone. The 6,7-epoxide in the cryptosporioptides could be introduced by the cytochrome P450 monooxygenase dmxL3. The highly reducing PKS dmxL2 manufactures butyrate, which is further carboxylated by dmxL1 to form ethylmalonate. It is not yet clear whether the carboxylation occurs while the butyrate is attached to the ACP of dmxL2, but this unusual fungal metabolite could then be esterified to O-5 by the O-acetyltransferase dmxR13. Finally, dimerization performed by dmxR5 gives the observed dimers cryptosporioptides A, B and C as the final products of the pathway. The sequence is that of Short chain dehydrogenase/reductase dmxR8 from Cryptosporiopsis sp. (strain 8999).